The chain runs to 525 residues: Mannuronan C5-epimerase AlgG (525 aa).

The first 29 residues, 1 to 29 (MNVQRKLASTQLKPVLLGVLLATSAWSQA), serve as a signal peptide directing secretion. 5 PbH1 repeats span residues 287–309 (ADDVVLKGNTYRDNIIYGIDPHD), 311–334 (SERLVIAENHVYGTKKKHGIIVSR), 336–358 (VNNSWIINNRTHDNKLSGIVLDR), 360–382 (SEHNLVAYNEVYQNHSDGITLYE), and 383–405 (SSNNLIWGNRLINNARHGIRMRN). H308 (proton acceptor) is an active-site residue.

Belongs to the D-mannuronate C5-epimerase family.

It is found in the periplasm. It carries out the reaction [(1-&gt;4)-beta-D-mannuronosyl](n) = [alginate](n). It functions in the pathway glycan biosynthesis; alginate biosynthesis. Inhibited by zinc. In terms of biological role, catalyzes the epimerization of beta-D-mannuronate to alpha-L-guluronate during the synthesis of the linear polysaccharide alginate. In addition, is part of a periplasmic protein complex that protects alginate from degradation by AlgL by channeling the newly formed alginate polymer through a scaffold that transfers the alginate polymer through the periplasmic space to the outer membrane secretin AlgE. This chain is Mannuronan C5-epimerase AlgG, found in Azotobacter vinelandii.